Here is a 662-residue protein sequence, read N- to C-terminus: uncharacterized protein (662 aa).

5 disordered regions span residues 1-94, 107-237, 288-328, 406-440, and 506-580; these read MSQR…NENN, DHNN…VKYH, ETTS…TPSA, QSSF…PIQM, and QNSI…MVSP. Over residues 25 to 49 the composition is skewed to low complexity; that stretch reads TTTTTPTPTTTTTTTSSLSSSTSST. The segment covering 77–87 has biased composition (basic and acidic residues); sequence DNIKLDNEKTF. The span at 109 to 161 shows a compositional bias: low complexity; the sequence is NNNNNNNNNNNNNNNNNNNNNNNNNNNNNNNNNNNNNNNNNNNNNNNNNNNNN. The span at 162–176 shows a compositional bias: polar residues; the sequence is DTQKGTNKNENNCTD. Positions 183–196 are enriched in low complexity; it reads STSTTSSSETGSST. A compositionally biased stretch (polar residues) spans 203–212; that stretch reads KTPQSCLKKS. Residues 213-224 show a composition bias toward low complexity; it reads NNNNNDNNNNNN. Residues 226–235 show a composition bias toward basic residues; that stretch reads KTPRSTKKVK. Composition is skewed to low complexity over residues 288-308, 413-434, 515-526, and 535-575; these read ETTS…TPIP, PTNN…TTTP, PTKSSSSTSIQQ, and NINN…NNNN.

This is an uncharacterized protein from Dictyostelium discoideum (Social amoeba).